Consider the following 209-residue polypeptide: Large ribosomal subunit protein uL3 (209 aa).

The disordered stretch occupies residues 118 to 152 (GFQGAIKRHGQSRGPMSHGSRYHRRPGSMGPVDPN).

It belongs to the universal ribosomal protein uL3 family. Part of the 50S ribosomal subunit. Forms a cluster with proteins L14 and L19.

In terms of biological role, one of the primary rRNA binding proteins, it binds directly near the 3'-end of the 23S rRNA, where it nucleates assembly of the 50S subunit. The protein is Large ribosomal subunit protein uL3 of Bacillus licheniformis (strain ATCC 14580 / DSM 13 / JCM 2505 / CCUG 7422 / NBRC 12200 / NCIMB 9375 / NCTC 10341 / NRRL NRS-1264 / Gibson 46).